The primary structure comprises 423 residues: Cytidylate cyclase (423 aa).

The Guanylate cyclase domain occupies 79 to 184; that stretch reads CSLFVDISGS…LKIRIGIDFG (106 aa). Phenylalanine 82 contacts a ribonucleoside 5'-triphosphate. Residues aspartate 84, isoleucine 85, and aspartate 128 each coordinate Mn(2+). The AGS-C domain stretch occupies residues 290 to 409; that stretch reads ENEQFYSPRD…ICHDSFGLFI (120 aa).

This sequence belongs to the adenylyl cyclase class-4/guanylyl cyclase family. Pyrimidine cyclase subfamily. Homodimer. Mn(2+) serves as cofactor.

Its subcellular location is the cytoplasm. The catalysed reaction is CTP = 3',5'-cyclic CMP + diphosphate. Its function is as follows. Pycsar (pyrimidine cyclase system for antiphage resistance) provides immunity against bacteriophage. The pyrimidine cyclase (PycC) synthesizes cyclic nucleotides in response to infection; these serve as specific second messenger signals. The signal activates the adjacent effector, leading to bacterial cell death and abortive phage infection. A clade E Pycsar system. Functionally, the pyrimidine cyclase gene of a two-gene Pycsar system, weakly generates cyclic CMP (cCMP) from CTP, has little to no activity on ATP, GTP or UTP. Expression of this and adjacent effector SaPycTM (AC P0DV39) probably confers resistance to bacteriophage. The genes are probably only expressed in response to bacteriophage infection. The chain is Cytidylate cyclase from Staphylococcus aureus.